A 310-amino-acid polypeptide reads, in one-letter code: Protein BIG GRAIN 1 (310 aa).

The tract at residues 77-140 is disordered; that stretch reads SYRARAPGPH…EKKAKKPGAS (64 aa). The span at 90–106 shows a compositional bias: low complexity; it reads SSSSECSSYGGFSSSEA.

This sequence belongs to the BIG GRAIN 1 (BG1) plant protein family. Mostly expressed in the vascular tissues of leaves, culms and young panicles, especially in hulls.

The protein localises to the cell membrane. Involved in auxin transport. Positive regulator of the auxin signaling pathway involved in gravitropism, plant growth and grain development. This Oryza sativa subsp. japonica (Rice) protein is Protein BIG GRAIN 1.